The sequence spans 361 residues: Glucose 1-dehydrogenase (361 aa).

Cysteine 41 contributes to the Zn(2+) binding site. Substrate is bound at residue threonine 43. The Zn(2+) site is built by histidine 68 and glutamate 69. The substrate site is built by glutamate 119, glutamate 156, and asparagine 160. Glutamate 156 contributes to the Zn(2+) binding site. Residues 216-218, 275-277, 304-306, and lysine 349 contribute to the NADP(+) site; these read NRH, FGT, and SVD. Aspartate 306 contributes to the substrate binding site.

Belongs to the zinc-containing alcohol dehydrogenase family. Glucose 1-dehydrogenase subfamily. In terms of assembly, homotetramer. It depends on Zn(2+) as a cofactor.

The enzyme catalyses D-glucose + NAD(+) = D-glucono-1,5-lactone + NADH + H(+). It catalyses the reaction D-glucose + NADP(+) = D-glucono-1,5-lactone + NADPH + H(+). It carries out the reaction D-galactose + NAD(+) = D-galactono-1,4-lactone + NADH + H(+). The catalysed reaction is D-galactose + NADP(+) = D-galactono-1,5-lactone + NADPH + H(+). Its function is as follows. Catalyzes the NAD(P)(+)-dependent oxidation of D-glucose to D-gluconate via gluconolactone. Is also significantly active with galactose as substrate, but not with mannose or glucose 6-phosphate. Can utilize both NAD(+) and NADP(+) as electron acceptor, with a marked preference for NADP(+). Physiologically, may be involved in the degradation of both glucose and galactose through a non-phosphorylative variant of the Entner-Doudoroff pathway. This Thermoplasma acidophilum (strain ATCC 25905 / DSM 1728 / JCM 9062 / NBRC 15155 / AMRC-C165) protein is Glucose 1-dehydrogenase.